Consider the following 160-residue polypeptide: Tumor suppressor ARF (160 aa).

Positions 1–63 (MGRRFVVTVR…RRGPQPHPGP (63 aa)) are interaction with CDK5RAP3 and MDM2. Disordered stretches follow at residues 49-74 (PERI…QSGS) and 90-116 (HPLP…GRGA).

Does not interact with cyclins, CDK1, CDK2, CDK4, CDK5 or CDK6. Binds to BCL6, E2F1, HUWE1, MDM2, MYC, NPM1/B23, TOP1/TOPOI and UBE2I/UBC9. Interacts with TBRG1 and COMMD1. Interacts with CDKN2AIP and E4F1. Interacts with CDK5RAP3 and MDM2; form a ternary complex involved in regulation of p53/TP53. Interacts with NOP53; the interaction is direct and promotes ARF nucleoplasmic relocalization and ubiquitin-mediated proteasomal degradation. Interacts with TTF1 (via the N-terminal region (NRD) and a C-terminal region); the interaction is direct and inhibits the nucleolar localization of TTF1. Ubiquitinated in normal cells by TRIP12 via the ubiquitin fusion degradation (UFD) pathway, a process that mediates ubiquitination at the N-terminus, regardless of the absence of lysine residues. Ubiquitination leads to its proteasomal degradation. In cancer cells, however, TRIP12 is located in a different cell compartment, preventing ubiquitination and degradation. Widely expressed with very low levels in kidney and colon.

It is found in the nucleus. Its subcellular location is the nucleolus. The protein localises to the nucleoplasm. In terms of biological role, capable of inducing cell cycle arrest in G1 and G2 phases. Acts as a tumor suppressor. Binds to MDM2 and blocks its nucleocytoplasmic shuttling by sequestering it in the nucleolus. This inhibits the oncogenic action of MDM2 by blocking MDM2-induced degradation of p53 and enhancing p53-dependent transactivation and apoptosis. Also induces G2 arrest and apoptosis in a p53-independent manner by preventing the activation of cyclin B1/CDC2 complexes. Binds to BCL6 and down-regulates BCL6-induced transcriptional repression. Binds to E2F1 and MYC and blocks their transcriptional activator activity but has no effect on MYC transcriptional repression. Binds to TOP1/TOPOI and stimulates its activity. This complex binds to rRNA gene promoters and may play a role in rRNA transcription and/or maturation. Interacts with NPM1/B23 and promotes its polyubiquitination and degradation, thus inhibiting rRNA processing. Plays a role in inhibiting ribosome biogenesis, perhaps by binding to the nucleolar localization sequence of transcription termination factor TTF1, and thereby preventing nucleolar localization of TTF1. Interacts with COMMD1 and promotes its 'Lys63'-linked polyubiquitination. Interacts with UBE2I/UBC9 and enhances sumoylation of a number of its binding partners including MDM2 and E2F1. Binds to HUWE1 and represses its ubiquitin ligase activity. May play a role in controlling cell proliferation and apoptosis during mammary gland development. This chain is Tumor suppressor ARF, found in Rattus norvegicus (Rat).